The sequence spans 298 residues: Probable porphobilinogen deaminase (298 aa).

C241 carries the S-(dipyrrolylmethanemethyl)cysteine modification.

It belongs to the HMBS family. Dipyrromethane serves as cofactor.

It carries out the reaction 4 porphobilinogen + H2O = hydroxymethylbilane + 4 NH4(+). It participates in porphyrin-containing compound metabolism; protoporphyrin-IX biosynthesis; coproporphyrinogen-III from 5-aminolevulinate: step 2/4. Tetrapolymerization of the monopyrrole PBG into the hydroxymethylbilane pre-uroporphyrinogen in several discrete steps. This is Probable porphobilinogen deaminase from Methanopyrus kandleri (strain AV19 / DSM 6324 / JCM 9639 / NBRC 100938).